Here is a 1151-residue protein sequence, read N- to C-terminus: Syntaxin-binding protein 5 (1151 aa).

The disordered stretch occupies residues 14-34; the sequence is TAGSSSASQQQQQQHPPGNRE. Over residues 17–27 the composition is skewed to low complexity; sequence SSSASQQQQQQ. 10 WD repeats span residues 61 to 94, 101 to 140, 145 to 181, 200 to 234, 240 to 272, 294 to 336, 344 to 378, 400 to 477, 505 to 619, and 633 to 695; these read SALAFDPVQKILAVGTQTGALRLFGRPGVECYCQ, VIQLQFLINEGALVSALADDTLHLWNLRQKRPAILHSLKF, VTFCHLPFQSKWLYVGTERGNIHIVNVESFTLSGYVI, HISDNPMDEGKLLIGFESGTVVLWDLKSKKADYRY, IHSVAWHHEGKQFICSHSDGTLTIWNVRSPAKP, PILK…KSTA, IVDFLTLCETPYPNDFQEPYAVVVLLEKDLVLIDL, TCCE…YKLK, QIIS…ELVI, and TSLA…SGAG. 2 disordered regions span residues 555–595 and 674–729; these read ETPE…GLRD and SNDP…EQKM. S692 is subject to Phosphoserine. Positions 712–721 are enriched in low complexity; sequence SPTSGSSSPH. Phosphoserine; by PKA is present on S723. S759 is subject to Phosphoserine. Residue T762 is modified to Phosphothreonine. S782 is subject to Phosphoserine. At T784 the chain carries Phosphothreonine. Phosphoserine is present on S785. WD repeat units follow at residues 794 to 851, 860 to 934, 939 to 983, and 997 to 1020; these read ISAL…SGTI, RMAF…QNCA, ITET…LDVY, and CFTNNGQALYLVSPTEIQRLTYSQ. Positions 881 to 892 are enriched in basic and acidic residues; it reads HNVPEEKDEKEK. The segment at 881–906 is disordered; the sequence is HNVPEEKDEKEKLKKRRPVSVSPSSS. S900 and S902 each carry phosphoserine. T1039 bears the Phosphothreonine mark. S1058 and S1131 each carry phosphoserine. The region spanning 1086–1146 is the v-SNARE coiled-coil homology domain; sequence GIEGVKGAAS…HEIMLKYKDK (61 aa).

It belongs to the WD repeat L(2)GL family. As to quaternary structure, interacts with STX1A and STX1B via its v-SNARE homology domain. Part of a complex that contains STX1, STXBP5, SNAP25 and SYT1. Part of a complex that contains STXBP5, STX4A and SNAP23.

It is found in the cytoplasm. The protein resides in the cell membrane. The protein localises to the cytoplasmic vesicle membrane. Its subcellular location is the cytoplasmic vesicle. It localises to the secretory vesicle. It is found in the synaptic vesicle. The protein resides in the synapse. Its function is as follows. Plays a regulatory role in calcium-dependent exocytosis and neurotransmitter release. Inhibits membrane fusion between transport vesicles and the plasma membrane. May modulate the assembly of trans-SNARE complexes between transport vesicles and the plasma membrane. Inhibits translocation of GLUT4 from intracellular vesicles to the plasma membrane. Competes with STXBP1 for STX1 binding. This Homo sapiens (Human) protein is Syntaxin-binding protein 5 (STXBP5).